A 284-amino-acid polypeptide reads, in one-letter code: MSANILDGKAIAANIRRNIKKRVQERITAGLRPPGLAVILLGSDPASQVYVRNKRRACEEVGFKSLAYDLPADTTQANLLALIDQLNADSTVDGILVQLPLGGHIDAEQVIEQIRPDKDVDGFHPYNIGRLTLRLPLLRPCTPHGVITLLRTTGQDLRGLEAVVVGASNIVGRPMMLELLLAGCTVTICHRWTRDLHKPISEADIVVAAVGKPHLIQGKWIKPGATVIDVGFTRQPDGTLTGDVEFESARQRALWITPVPGGVGPMTIATLLQNTLYATEKLHE.

166 to 168 is a binding site for NADP(+); the sequence is GAS.

The protein belongs to the tetrahydrofolate dehydrogenase/cyclohydrolase family. In terms of assembly, homodimer.

The catalysed reaction is (6R)-5,10-methylene-5,6,7,8-tetrahydrofolate + NADP(+) = (6R)-5,10-methenyltetrahydrofolate + NADPH. It carries out the reaction (6R)-5,10-methenyltetrahydrofolate + H2O = (6R)-10-formyltetrahydrofolate + H(+). It participates in one-carbon metabolism; tetrahydrofolate interconversion. Its function is as follows. Catalyzes the oxidation of 5,10-methylenetetrahydrofolate to 5,10-methenyltetrahydrofolate and then the hydrolysis of 5,10-methenyltetrahydrofolate to 10-formyltetrahydrofolate. The protein is Bifunctional protein FolD of Nitrosococcus oceani (strain ATCC 19707 / BCRC 17464 / JCM 30415 / NCIMB 11848 / C-107).